The chain runs to 198 residues: Translation machinery-associated protein 22 (198 aa).

Positions 99 to 170 constitute an SUI1 domain; that stretch reads VIIKREARTK…EVETYIHSLL (72 aa).

The protein belongs to the DENR family. Interacts with the 40S ribosomal subunit.

The protein resides in the cytoplasm. The polypeptide is Translation machinery-associated protein 22 (TMA22) (Saccharomyces cerevisiae (strain YJM789) (Baker's yeast)).